The chain runs to 297 residues: Aspartate carbamoyltransferase catalytic subunit (297 aa).

Carbamoyl phosphate is bound by residues R51 and T52. K79 contacts L-aspartate. 3 residues coordinate carbamoyl phosphate: R101, H130, and Q133. 2 residues coordinate L-aspartate: R163 and R215. The carbamoyl phosphate site is built by G256 and P257.

The protein belongs to the aspartate/ornithine carbamoyltransferase superfamily. ATCase family. As to quaternary structure, heterododecamer (2C3:3R2) of six catalytic PyrB chains organized as two trimers (C3), and six regulatory PyrI chains organized as three dimers (R2).

The catalysed reaction is carbamoyl phosphate + L-aspartate = N-carbamoyl-L-aspartate + phosphate + H(+). It functions in the pathway pyrimidine metabolism; UMP biosynthesis via de novo pathway; (S)-dihydroorotate from bicarbonate: step 2/3. Its function is as follows. Catalyzes the condensation of carbamoyl phosphate and aspartate to form carbamoyl aspartate and inorganic phosphate, the committed step in the de novo pyrimidine nucleotide biosynthesis pathway. This Ehrlichia ruminantium (strain Gardel) protein is Aspartate carbamoyltransferase catalytic subunit.